We begin with the raw amino-acid sequence, 475 residues long: Probable dolichyl pyrophosphate Man9GlcNAc2 alpha-1,3-glucosyltransferase (475 aa).

The next 8 helical transmembrane spans lie at 114-133 (VVSA…AYSL), 161-181 (GHFQ…AAIL), 235-255 (AVVL…LQAV), 296-316 (MALV…VLLF), 322-342 (VGFL…SFQV), 385-405 (LLVP…CFDS), 418-438 (IANI…TVPA), and 441-461 (KYPD…FFLF).

It belongs to the ALG6/ALG8 glucosyltransferase family.

It is found in the endoplasmic reticulum membrane. It carries out the reaction an alpha-D-Man-(1-&gt;2)-alpha-D-Man-(1-&gt;2)-alpha-D-Man-(1-&gt;3)-[alpha-D-Man-(1-&gt;2)-alpha-D-Man-(1-&gt;3)-[alpha-D-Man-(1-&gt;2)-alpha-D-Man-(1-&gt;6)]-alpha-D-Man-(1-&gt;6)]-beta-D-Man-(1-&gt;4)-beta-D-GlcNAc-(1-&gt;4)-alpha-D-GlcNAc-diphospho-di-trans,poly-cis-dolichol + a di-trans,poly-cis-dolichyl beta-D-glucosyl phosphate = an alpha-D-Glc-(1-&gt;3)-alpha-D-Man-(1-&gt;2)-alpha-D-Man-(1-&gt;2)-alpha-D-Man-(1-&gt;3)-[alpha-D-Man-(1-&gt;2)-alpha-D-Man-(1-&gt;3)-[alpha-D-Man-(1-&gt;2)-alpha-D-Man-(1-&gt;6)]-alpha-D-Man-(1-&gt;6)]-beta-D-Man-(1-&gt;4)-beta-D-GlcNAc-(1-&gt;4)-alpha-D-GlcNAc-diphospho-di-trans,poly-cis-dolichol + a di-trans,poly-cis-dolichyl phosphate + H(+). It participates in protein modification; protein glycosylation. In terms of biological role, adds the first glucose residue to the lipid-linked oligosaccharide precursor for N-linked glycosylation. Transfers glucose from dolichyl phosphate glucose (Dol-P-Glc) onto the lipid-linked oligosaccharide Man(9)GlcNAc(2)-PP-Dol. Involved in cuticle differentiation. The sequence is that of Probable dolichyl pyrophosphate Man9GlcNAc2 alpha-1,3-glucosyltransferase (gny) from Drosophila melanogaster (Fruit fly).